The chain runs to 411 residues: S-adenosylmethionine synthase (411 aa).

His15 serves as a coordination point for ATP. Residue Asp17 participates in Mg(2+) binding. Glu43 is a binding site for K(+). Residues Glu56 and Gln100 each coordinate L-methionine. The flexible loop stretch occupies residues 100–110 (QSPDIAQGVNE). ATP contacts are provided by residues 171–173 (DGK), 248–249 (KF), Asp257, 263–264 (RK), Ala280, and Lys284. Position 257 (Asp257) interacts with L-methionine. L-methionine is bound at residue Lys288.

This sequence belongs to the AdoMet synthase family. As to quaternary structure, homotetramer; dimer of dimers. The cofactor is Mg(2+). It depends on K(+) as a cofactor.

Its subcellular location is the cytoplasm. It carries out the reaction L-methionine + ATP + H2O = S-adenosyl-L-methionine + phosphate + diphosphate. The protein operates within amino-acid biosynthesis; S-adenosyl-L-methionine biosynthesis; S-adenosyl-L-methionine from L-methionine: step 1/1. In terms of biological role, catalyzes the formation of S-adenosylmethionine (AdoMet) from methionine and ATP. The overall synthetic reaction is composed of two sequential steps, AdoMet formation and the subsequent tripolyphosphate hydrolysis which occurs prior to release of AdoMet from the enzyme. The chain is S-adenosylmethionine synthase from Synechococcus sp. (strain CC9605).